The following is an 862-amino-acid chain: Active breakpoint cluster region-related protein (862 aa).

The disordered stretch occupies residues 29–84 (YDAEGNEEHKNSREGSETMPYIDESPTMSPQLSARSQDSVDGVSPTPTEVLLPGGE). Basic and acidic residues predominate over residues 34–44 (NEEHKNSREGS). Over residues 54-67 (PTMSPQLSARSQDS) the composition is skewed to polar residues. Residues 93 to 286 (MRKLVLSGVL…QNFLSSINED (194 aa)) enclose the DH domain. The region spanning 303–462 (QLVKDGFLVE…WREAIQKLQK (160 aa)) is the PH domain. The C2 domain occupies 488-616 (VHNVPIISHK…QSKNWHDDVI (129 aa)). The Rho-GAP domain maps to 650-848 (VKISVVTKRE…YYLQHPPISF (199 aa)).

It is found in the cell projection. It localises to the dendritic spine. The protein localises to the axon. Its subcellular location is the synapse. Functionally, protein with a unique structure having two opposing regulatory activities toward small GTP-binding proteins. The C-terminus is a GTPase-activating protein domain which stimulates GTP hydrolysis by RAC1, RAC2 and CDC42. Accelerates the intrinsic rate of GTP hydrolysis of RAC1 or CDC42, leading to down-regulation of the active GTP-bound form. The central Dbl homology (DH) domain functions as guanine nucleotide exchange factor (GEF) that modulates the GTPases CDC42, RHOA and RAC1. Promotes the conversion of CDC42, RHOA and RAC1 from the GDP-bound to the GTP-bound form. The sequence is that of Active breakpoint cluster region-related protein (abr) from Xenopus laevis (African clawed frog).